Consider the following 137-residue polypeptide: Cell division protein SepF (137 aa).

The protein belongs to the SepF family. In terms of assembly, homodimer. Interacts with FtsZ.

It is found in the cytoplasm. Cell division protein that is part of the divisome complex and is recruited early to the Z-ring. Probably stimulates Z-ring formation, perhaps through the cross-linking of FtsZ protofilaments. Its function overlaps with FtsA. This is Cell division protein SepF from Thermoanaerobacter pseudethanolicus (strain ATCC 33223 / 39E) (Clostridium thermohydrosulfuricum).